Reading from the N-terminus, the 338-residue chain is 3 beta-hydroxysteroid dehydrogenase type 7 (338 aa).

The Proton acceptor role is filled by Tyr159. Residue Lys163 coordinates NAD(+). The next 2 helical transmembrane spans lie at 258–278 (LLPYWLLVLLTALNALLQWLL) and 280–300 (PLVLYTPLLNPYTLAVANTTF).

The protein belongs to the 3-beta-HSD family. As to expression, high levels in liver and lung, moderate levels in spleen, brain, heart, kidney, jejunum and testis. Up-regulated in 3Y1 cells upon growth arrest.

It localises to the endoplasmic reticulum membrane. It catalyses the reaction 7alpha-hydroxycholesterol + NAD(+) = 7alpha-hydroxycholest-4-en-3-one + NADH + H(+). The enzyme catalyses 7alpha,25-dihydroxycholesterol + NAD(+) = 7alpha,25-dihydroxy-4-cholesten-3-one + NADH + H(+). The catalysed reaction is (25R)-cholest-5-en-3beta,7alpha,26-triol + NAD(+) = (25R)-7alpha,26-dihydroxycholest-4-en-3-one + NADH + H(+). It carries out the reaction (24S)-7alpha-dihydroxycholesterol + NAD(+) = (24S)-7alpha,24-dihydroxycholest-4-en-3-one + NADH + H(+). It functions in the pathway lipid metabolism; steroid biosynthesis. Its function is as follows. The 3-beta-HSD enzymatic system plays a crucial role in the biosynthesis of all classes of hormonal steroids. HSD VII is active against four 7-alpha-hydroxylated sterols. Does not metabolize several different C(19/21) steroids as substrates. Involved in bile acid synthesis. Plays a key role in cell positioning and movement in lymphoid tissues by mediating degradation of 7-alpha,25-dihydroxycholesterol (7-alpha,25-OHC): 7-alpha,25-OHC acts as a ligand for the G protein-coupled receptor GPR183/EBI2, a chemotactic receptor for a number of lymphoid cells. This chain is 3 beta-hydroxysteroid dehydrogenase type 7, found in Rattus norvegicus (Rat).